Reading from the N-terminus, the 490-residue chain is Cardiolipin synthase 1 (490 aa).

2 consecutive transmembrane segments (helical) span residues 9–29 (ILTI…FVII) and 42–62 (WAWL…YLFL). PLD phosphodiesterase domains follow at residues 225–252 (MNNR…GDDY) and 403–430 (QNGF…DFRS). Residues His-230, Lys-232, Asp-237, His-408, Lys-410, and Asp-415 contribute to the active site.

This sequence belongs to the phospholipase D family. Cardiolipin synthase subfamily.

It is found in the cell membrane. It catalyses the reaction 2 a 1,2-diacyl-sn-glycero-3-phospho-(1'-sn-glycerol) = a cardiolipin + glycerol. In terms of biological role, catalyzes the reversible phosphatidyl group transfer from one phosphatidylglycerol molecule to another to form cardiolipin (CL) (diphosphatidylglycerol) and glycerol. The protein is Cardiolipin synthase 1 (cls1) of Staphylococcus epidermidis (strain ATCC 35984 / DSM 28319 / BCRC 17069 / CCUG 31568 / BM 3577 / RP62A).